Consider the following 493-residue polypeptide: Tripartite motif-containing protein 5 (493 aa).

At A2 the chain carries N-acetylalanine. The RING-type zinc finger occupies 15–59 (CPICLELLTQPLSLDCGHSFCQACLTANHKKSMLDKGESSCPVCR). S86 bears the Phosphoserine mark. The segment at 90 to 132 (QKVDHCARHGEKLLLFCQEDGKVICWLCERSQEHRGHHTFLTE) adopts a B box-type zinc-finger fold. Residues C95, H98, C117, and H123 each contribute to the Zn(2+) site. A coiled-coil region spans residues 131 to 240 (TEEVAREYQV…LISDLERRLQ (110 aa)). The interval 185–198 (FEQLRDILDWEESN) is required for interaction with GABARAP and for autophagy. A B30.2/SPRY domain is found at 281 to 493 (LKGMLEVFRE…VPMTLCSPSS (213 aa)).

It belongs to the TRIM/RBCC family. As to quaternary structure, can form homodimers and homotrimers. In addition to lower-order dimerization, also exhibits a higher-order multimerization and both low- and high-order multimerizations are essential for its restriction activity. Interacts with BTBD1 and BTBD2. Interacts with PSMC4, PSMC5, PSMD7 and HSPA8/HSC70. Interacts (via B30.2/SPRY domain) with HSPA1A/B. Interacts with PSMC2, MAP3K7/TAK1, TAB2 and TAB3. Interacts with SQSTM1. Interacts with TRIM6 and TRIM34. Interacts with ULK1 (phosphorylated form), GABARAP, GABARAPL1, GABARAPL2, MAP1LC3A, MAP1LC3C and BECN1. In terms of processing, degraded in a proteasome-independent fashion in the absence of viral infection but in a proteasome-dependent fashion following exposure to restriction sensitive virus. Post-translationally, autoubiquitinated in a RING finger- and UBE2D2-dependent manner. Monoubiquitinated by TRIM21. Deubiquitinated by Yersinia YopJ. Ubiquitination may not lead to proteasomal degradation.

It localises to the cytoplasm. It is found in the nucleus. The enzyme catalyses S-ubiquitinyl-[E2 ubiquitin-conjugating enzyme]-L-cysteine + [acceptor protein]-L-lysine = [E2 ubiquitin-conjugating enzyme]-L-cysteine + N(6)-ubiquitinyl-[acceptor protein]-L-lysine.. Its pathway is protein modification; protein ubiquitination. Its function is as follows. Capsid-specific restriction factor that prevents infection from non-host-adapted retroviruses. Blocks viral replication early in the life cycle, after viral entry but before reverse transcription. In addition to acting as a capsid-specific restriction factor, also acts as a pattern recognition receptor that activates innate immune signaling in response to the retroviral capsid lattice. Binding to the viral capsid triggers its E3 ubiquitin ligase activity, and in concert with the heterodimeric ubiquitin conjugating enzyme complex UBE2V1-UBE2N (also known as UBC13-UEV1A complex) generates 'Lys-63'-linked polyubiquitin chains, which in turn are catalysts in the autophosphorylation of the MAP3K7/TAK1 complex (includes TAK1, TAB2, and TAB3). Activation of the MAP3K7/TAK1 complex by autophosphorylation results in the induction and expression of NF-kappa-B and MAPK-responsive inflammatory genes, thereby leading to an innate immune response in the infected cell. Plays a role in regulating autophagy through activation of autophagy regulator BECN1 by causing its dissociation from its inhibitors BCL2 and TAB2. In Pan paniscus (Pygmy chimpanzee), this protein is Tripartite motif-containing protein 5 (TRIM5).